Reading from the N-terminus, the 643-residue chain is DNA-directed RNA polymerase subunit beta' (643 aa).

Zn(2+) contacts are provided by C83, C85, C98, and C101. D480, D482, and D484 together coordinate Mg(2+).

The protein belongs to the RNA polymerase beta' chain family. RpoC1 subfamily. In plastids the minimal PEP RNA polymerase catalytic core is composed of four subunits: alpha, beta, beta', and beta''. When a (nuclear-encoded) sigma factor is associated with the core the holoenzyme is formed, which can initiate transcription. It depends on Mg(2+) as a cofactor. Zn(2+) is required as a cofactor.

The protein localises to the plastid. Its subcellular location is the organellar chromatophore. The enzyme catalyses RNA(n) + a ribonucleoside 5'-triphosphate = RNA(n+1) + diphosphate. Functionally, DNA-dependent RNA polymerase catalyzes the transcription of DNA into RNA using the four ribonucleoside triphosphates as substrates. The sequence is that of DNA-directed RNA polymerase subunit beta' from Paulinella chromatophora.